A 582-amino-acid polypeptide reads, in one-letter code: Aspartate--tRNA ligase (582 aa).

Glu174 contacts L-aspartate. Residues 198–201 (QITK) form an aspartate region. L-aspartate is bound at residue Arg220. ATP-binding positions include 220–222 (RDE) and Gln229. Residue His443 coordinates L-aspartate. Residue Glu477 participates in ATP binding. Residue Arg484 participates in L-aspartate binding. 529–532 (GLDR) contacts ATP.

This sequence belongs to the class-II aminoacyl-tRNA synthetase family. Type 1 subfamily. As to quaternary structure, homodimer.

It localises to the cytoplasm. The catalysed reaction is tRNA(Asp) + L-aspartate + ATP = L-aspartyl-tRNA(Asp) + AMP + diphosphate. In terms of biological role, catalyzes the attachment of L-aspartate to tRNA(Asp) in a two-step reaction: L-aspartate is first activated by ATP to form Asp-AMP and then transferred to the acceptor end of tRNA(Asp). The sequence is that of Aspartate--tRNA ligase from Streptococcus equi subsp. zooepidemicus (strain MGCS10565).